Here is a 130-residue protein sequence, read N- to C-terminus: Small ribosomal subunit protein uS11c (130 aa).

Belongs to the universal ribosomal protein uS11 family. As to quaternary structure, part of the 30S ribosomal subunit.

The protein resides in the plastid. It is found in the chloroplast. The polypeptide is Small ribosomal subunit protein uS11c (Pyropia yezoensis (Susabi-nori)).